The sequence spans 514 residues: MSSNRQAYYKNNAKEQIGKEKRNEEVVSIRKDKREEAISKRRNINTQIEDDSETSTTPPGPFDANLLRLTVAAAQSSDPAEQLTAVQQARKMLSTDRNPPIDDLIGSGILPVLVQCLSSTDPNLQFEAAWALTNIASGTSEQTQAVVNAGAVPLFLQLLSCGNLNVCEQSVWALGNIIGDGPHFRDYCLELGILQPLLQFINPEIPIGFLRNVTWVIVNLCRCKDPAPSPAVVRTILPALSLLIHHQDTNILIDTVWALSYLTDGGNEHIQMVIEAQVVTHLVPLLGHVDVKVQTAALRAVGNIVTGTDEQTQLVLDSGVLRFMPGLLAHYKEKINKEAVWFVSNITAGNQQQVQDVFDAGIMPMIIHLLDRGDFPTQKEAAWAISNVTISGRPNQVEQMVKLGVLRPFCAMLSCTDSQIIQVVLDGINNILKMAGEAAEQVTSEIEECGGLDKIENLQNHENEDIYKLAFEIIDNFFSSDDETGNVEGAQSSAFGGDVPPVPDAPNGGWNFGK.

Residues 1-51 (MSSNRQAYYKNNAKEQIGKEKRNEEVVSIRKDKREEAISKRRNINTQIEDD) form the IBB domain. Residues 1–62 (MSSNRQAYYK…ETSTTPPGPF (62 aa)) are disordered. Positions 12-39 (NAKEQIGKEKRNEEVVSIRKDKREEAIS) are enriched in basic and acidic residues. ARM repeat units follow at residues 101–142 (IDDL…TSEQ), 143–187 (TQAV…FRDY), 188–226 (CLEL…CKDP), 227–271 (APSP…EHIQ), 272–311 (MVIE…TDEQ), 312–353 (TQLV…NQQQ), 354–393 (VQDV…ISGR), and 394–436 (PNQV…KMAG). The tract at residues 485 to 514 (GNVEGAQSSAFGGDVPPVPDAPNGGWNFGK) is disordered.

This sequence belongs to the importin alpha family. In terms of assembly, forms a complex with an importin beta subunit. May interact with transcription factor cebp-1 (via N-terminus). Interacts with cmk-1; affinity for cmk-1 is increased in the presence of Ca(2+) and calmodulin and leads to increased nuclear accumulation of cmk-1 in FLP neurons upon prolonged heat activation. Expressed in larval and adult germline and somatic tissues, including neurons.

It is found in the cytoplasm. The protein resides in the nucleus. In terms of biological role, binds specifically and directly to substrates containing either a simple or bipartite NLS motif. Promotes docking of import substrates to the nuclear envelope. Seems to act as a cytosolic receptor for both simple and bipartite NLS motifs. Necessary for correct nucleoporin localization within the germline. Essential gene for embryonic and larval development. May be dispensable for axon development, but required for axon regeneration in both mechanosensory and motor neurons. Required for oogenic development, ima-1 and ima-2 cannot functionally compensate for loss of ima-3. This is Importin subunit alpha-3 (ima-3) from Caenorhabditis elegans.